Here is a 45-residue protein sequence, read N- to C-terminus: Photosystem II reaction center protein K (45 aa).

Positions 1–8 are excised as a propeptide; the sequence is MEAVLLLA. Residues 24 to 44 form a helical membrane-spanning segment; that stretch reads MPVIPLFFLALAFVWQAAVGF.

This sequence belongs to the PsbK family. As to quaternary structure, PSII is composed of 1 copy each of membrane proteins PsbA, PsbB, PsbC, PsbD, PsbE, PsbF, PsbH, PsbI, PsbJ, PsbK, PsbL, PsbM, PsbT, PsbX, PsbY, PsbZ, Psb30/Ycf12, peripheral proteins PsbO, CyanoQ (PsbQ), PsbU, PsbV and a large number of cofactors. It forms dimeric complexes.

It localises to the cellular thylakoid membrane. In terms of biological role, one of the components of the core complex of photosystem II (PSII). PSII is a light-driven water:plastoquinone oxidoreductase that uses light energy to abstract electrons from H(2)O, generating O(2) and a proton gradient subsequently used for ATP formation. It consists of a core antenna complex that captures photons, and an electron transfer chain that converts photonic excitation into a charge separation. This is Photosystem II reaction center protein K from Acaryochloris marina (strain MBIC 11017).